Consider the following 767-residue polypeptide: Two-component response regulator-like PRR73 (767 aa).

The interval 1 to 64 is disordered; the sequence is MGSACEAGTD…EPQQTDEQKE (64 aa). A Response regulatory domain is found at 82–200; sequence RVLLVENDDS…ELKNLWQHVW (119 aa). Positions 205 to 214 are enriched in low complexity; it reads SSSGSGSESG. Disordered regions lie at residues 205 to 272, 312 to 388, 476 to 546, 646 to 701, and 727 to 767; these read SSSG…QSSW, RWLP…NEPT, ASNQ…RGKV, ANYS…SGSG, and NFGK…DEDR. Over residues 238–252 the composition is skewed to acidic residues; the sequence is DNEDDDDNDEDDDDL. Composition is skewed to polar residues over residues 263-272, 343-361, and 488-497; these read DNGSGTQSSW, RNSSMEYQSSPREMSVNPT, and CSPQDNSSEA. Over residues 518–531 the composition is skewed to low complexity; that stretch reads GSNGSSNNNDMGSS. A compositionally biased stretch (polar residues) spans 532–543; that stretch reads TKNAITKPSSNR. The span at 689–700 shows a compositional bias: gly residues; that stretch reads GAGGGNGSGSGS. The 43-residue stretch at 712–754 folds into the CCT domain; that stretch reads REAALNKFRQKRKVRNFGKKVRYQSRKRLAEQRPRIRGQFVRQ. Over residues 727 to 738 the composition is skewed to basic residues; the sequence is NFGKKVRYQSRK.

Belongs to the ARR-like family.

It localises to the nucleus. Its function is as follows. Controls photoperiodic flowering response. Seems to be one of the component of the circadian clock. Expression of several members of the ARR-like family is controlled by circadian rhythm. The particular coordinated sequential expression of PRR73, PRR37, PRR95, PRR59 and PPR1 result to circadian waves that may be at the basis of the endogenous circadian clock. In Oryza sativa subsp. japonica (Rice), this protein is Two-component response regulator-like PRR73 (PRR73).